The primary structure comprises 723 residues: Malate synthase G (723 aa).

Acetyl-CoA is bound by residues valine 118, 125-126 (RY), serine 274, and arginine 311. The active-site Proton acceptor is the arginine 338. Glyoxylate contacts are provided by residues arginine 338, glutamate 427, and 452 to 455 (GFLD). Mg(2+)-binding residues include glutamate 427 and aspartate 455. An acetyl-CoA-binding site is contributed by proline 536. Cysteine 617 carries the post-translational modification Cysteine sulfenic acid (-SOH). Aspartate 631 acts as the Proton donor in catalysis. At cysteine 688 the chain carries Cysteine sulfenic acid (-SOH).

Belongs to the malate synthase family. GlcB subfamily. As to quaternary structure, monomer. The cofactor is Mg(2+).

It localises to the cytoplasm. The catalysed reaction is glyoxylate + acetyl-CoA + H2O = (S)-malate + CoA + H(+). Its pathway is carbohydrate metabolism; glyoxylate cycle; (S)-malate from isocitrate: step 2/2. Functionally, involved in the glycolate utilization. Catalyzes the condensation and subsequent hydrolysis of acetyl-coenzyme A (acetyl-CoA) and glyoxylate to form malate and CoA. This chain is Malate synthase G, found in Escherichia coli O6:H1 (strain CFT073 / ATCC 700928 / UPEC).